The primary structure comprises 120 residues: Large ribosomal subunit protein uL18 (120 aa).

The protein belongs to the universal ribosomal protein uL18 family. As to quaternary structure, part of the 50S ribosomal subunit; part of the 5S rRNA/L5/L18/L25 subcomplex. Contacts the 5S and 23S rRNAs.

Its function is as follows. This is one of the proteins that bind and probably mediate the attachment of the 5S RNA into the large ribosomal subunit, where it forms part of the central protuberance. The protein is Large ribosomal subunit protein uL18 of Lawsonia intracellularis (strain PHE/MN1-00).